The following is a 161-amino-acid chain: UPF0506 protein SJCHGC02965 (161 aa).

An N-terminal signal peptide occupies residues 1 to 13; sequence QLLILCLVTVINS. 9 N-linked (GlcNAc...) asparagine glycosylation sites follow: asparagine 15, asparagine 19, asparagine 31, asparagine 43, asparagine 47, asparagine 59, asparagine 63, asparagine 75, and asparagine 121. Cystine bridges form between cysteine 127–cysteine 141, cysteine 134–cysteine 145, and cysteine 140–cysteine 150.

It belongs to the UPF0506 family.

The protein resides in the secreted. This is UPF0506 protein SJCHGC02965 from Schistosoma japonicum (Blood fluke).